Here is a 522-residue protein sequence, read N- to C-terminus: Sorting nexin-1 (522 aa).

The interval 1–142 (MASGGGGCSA…ELEEEEQEDQ (142 aa)) is disordered. 2 positions are modified to phosphoserine: serine 32 and serine 39. Residues 35–45 (EAGDSDTEGED) show a composition bias toward acidic residues. Threonine 41 and threonine 48 each carry phosphothreonine. Serine 58 and serine 72 each carry phosphoserine. The span at 132–142 (EELEEEEQEDQ) shows a compositional bias: acidic residues. Residues 143–272 (FDLTVGITDP…EFLEKEELPR (130 aa)) enclose the PX domain. A 1,2-diacyl-sn-glycero-3-phospho-(1D-myo-inositol-3-phosphate)-binding residues include arginine 186, serine 188, and lysine 214. At serine 188 the chain carries Phosphoserine. N6-acetyllysine is present on lysine 237. Arginine 238 lines the a 1,2-diacyl-sn-glycero-3-phospho-(1D-myo-inositol-3-phosphate) pocket. The residue at position 280 (serine 280) is a Phosphoserine. Residues 281–298 (GAGLLKMFNKATDAVSKM) are membrane-binding amphipathic helix. The BAR domain occupies 302–522 (MNESDIWFEE…AFLPEAKAIS (221 aa)).

It belongs to the sorting nexin family. Predominantly forms heterodimers with BAR domain-containing sorting nexins SNX5, SNX6 and SNX32; can self-associate to form homodimers. The heterodimers are proposed to self-assemble into helical arrays on the membrane to stabilize and expand local membrane curvature underlying endosomal tubule formation. Thought to be a component of the originally described retromer complex (also called SNX-BAR retromer) which is a pentamer containing the heterotrimeric retromer cargo-selective complex (CSC), also described as vacuolar protein sorting subcomplex (VPS) and a heterodimeric membrane-deforming subcomplex formed between SNX1 or SNX2 and SNX5 or SNX6 (also called SNX-BAR subcomplex); the respective CSC and SNX-BAR subcomplexes associate with low affinity. Interacts with SNX5, SNX6, SNX32, VPS26A, VPS29, VPS35, DRD5, DENND5A, KALRN, RHOG (GDP-bound form). The interaction with SNX2 is reported controversially. Interacts with DNAJC13; prevented by presence of HGS. Interacts with HGS.

Its subcellular location is the endosome membrane. It localises to the golgi apparatus. The protein localises to the trans-Golgi network membrane. It is found in the early endosome membrane. The protein resides in the cell projection. Its subcellular location is the lamellipodium. Functionally, involved in several stages of intracellular trafficking. Interacts with membranes containing phosphatidylinositol 3-phosphate (PtdIns(3P)) or phosphatidylinositol 3,5-bisphosphate (PtdIns(3,5)P2). Acts in part as component of the retromer membrane-deforming SNX-BAR subcomplex. The SNX-BAR retromer mediates retrograde transport of cargo proteins from endosomes to the trans-Golgi network (TGN) and is involved in endosome-to-plasma membrane transport for cargo protein recycling. The SNX-BAR subcomplex functions to deform the donor membrane into a tubular profile called endosome-to-TGN transport carrier (ETC). Can sense membrane curvature and has in vitro vesicle-to-membrane remodeling activity. Involved in retrograde endosome-to-TGN transport of lysosomal enzyme receptors (IGF2R, M6PR and SORT1). Plays a role in targeting ligand-activated EGFR to the lysosomes for degradation after endocytosis from the cell surface and release from the Golgi. Involvement in retromer-independent endocytic trafficking of P2RY1 and lysosomal degradation of protease-activated receptor-1/F2R. Promotes KALRN- and RHOG-dependent but retromer-independent membrane remodeling such as lamellipodium formation; the function is dependent on GEF activity of KALRN. Required for endocytosis of DRD5 upon agonist stimulation but not for basal receptor trafficking. The protein is Sorting nexin-1 (SNX1) of Bos taurus (Bovine).